The primary structure comprises 733 residues: Photosystem I P700 chlorophyll a apoprotein A2 (733 aa).

The next 8 helical transmembrane spans lie at 46–69, 134–157, 174–198, 272–290, 329–352, 368–394, 416–438, and 516–534; these read IFAS…FHVA, LYLG…LHLQ, LNHH…HVAI, IAHH…GHMY, LHMQ…QHMY, AALY…IFFV, AIIS…LYIH, and FLVH…LILV. Residues Cys-558 and Cys-567 each coordinate [4Fe-4S] cluster. Helical transmembrane passes span 574 to 595 and 642 to 664; these read AFYL…YWHW and LSVW…MFLI. 3 residues coordinate chlorophyll a: His-653, Met-661, and Tyr-669. Phylloquinone is bound at residue Trp-670. The helical transmembrane segment at 706–726 threads the bilayer; the sequence is LVGLVHFTVGYVLTYAAFVIA.

The protein belongs to the PsaA/PsaB family. In terms of assembly, the PsaA/B heterodimer binds the P700 chlorophyll special pair and subsequent electron acceptors. PSI consists of a core antenna complex that captures photons, and an electron transfer chain that converts photonic excitation into a charge separation. The eukaryotic PSI reaction center is composed of at least 11 subunits. It depends on P700 is a chlorophyll a/chlorophyll a' dimer, A0 is one or more chlorophyll a, A1 is one or both phylloquinones and FX is a shared 4Fe-4S iron-sulfur center. as a cofactor.

Its subcellular location is the plastid. The protein localises to the chloroplast thylakoid membrane. The catalysed reaction is reduced [plastocyanin] + hnu + oxidized [2Fe-2S]-[ferredoxin] = oxidized [plastocyanin] + reduced [2Fe-2S]-[ferredoxin]. PsaA and PsaB bind P700, the primary electron donor of photosystem I (PSI), as well as the electron acceptors A0, A1 and FX. PSI is a plastocyanin/cytochrome c6-ferredoxin oxidoreductase, converting photonic excitation into a charge separation, which transfers an electron from the donor P700 chlorophyll pair to the spectroscopically characterized acceptors A0, A1, FX, FA and FB in turn. Oxidized P700 is reduced on the lumenal side of the thylakoid membrane by plastocyanin or cytochrome c6. The protein is Photosystem I P700 chlorophyll a apoprotein A2 of Phaeodactylum tricornutum (strain CCAP 1055/1).